The chain runs to 260 residues: NH(3)-dependent NAD(+) synthetase (260 aa).

31–38 (GLSGGLDS) is a binding site for ATP. Residue Asp37 coordinates Mg(2+). Arg112 lines the deamido-NAD(+) pocket. Thr132 serves as a coordination point for ATP. Residue Glu137 participates in Mg(2+) binding. Residues Lys161 and Ser183 each coordinate ATP.

Belongs to the NAD synthetase family. As to quaternary structure, homodimer.

The catalysed reaction is deamido-NAD(+) + NH4(+) + ATP = AMP + diphosphate + NAD(+) + H(+). The protein operates within cofactor biosynthesis; NAD(+) biosynthesis; NAD(+) from deamido-NAD(+) (ammonia route): step 1/1. In terms of biological role, catalyzes the ATP-dependent amidation of deamido-NAD to form NAD. Uses ammonia as a nitrogen source. The chain is NH(3)-dependent NAD(+) synthetase from Helicobacter pylori (strain ATCC 700392 / 26695) (Campylobacter pylori).